The sequence spans 330 residues: Aspartate--ammonia ligase (330 aa).

The protein belongs to the class-II aminoacyl-tRNA synthetase family. AsnA subfamily.

The protein resides in the cytoplasm. It catalyses the reaction L-aspartate + NH4(+) + ATP = L-asparagine + AMP + diphosphate + H(+). The protein operates within amino-acid biosynthesis; L-asparagine biosynthesis; L-asparagine from L-aspartate (ammonia route): step 1/1. This Streptococcus pyogenes serotype M3 (strain ATCC BAA-595 / MGAS315) protein is Aspartate--ammonia ligase.